Reading from the N-terminus, the 316-residue chain is MAKSQMALCCMSHSPLLNLPGPAQELLDDIEGAIAAAREFVAAFDPDLVVTFSPDHYNGFFYRAMPPFCVGTAAAGVGDYGTYQGPLDVPADLAIDCARAVLDSDVDVAVSAAMDVDHGTVQPLQKLFGDATAKPVIPVFVNSVATPLGPMRRVRALGAAVGTHLAGLGKRVLVIGSGGLSHDPPVPTLATAPPAALDRIVRGVPMTTEQRQARQAAVIEAAREFASGQGALAPLNPDWDRAFLDLLDNGRLAEVDSWDNRWIAEQAGNSAHEVRTWVAAFAALAAQGKYETGNRYYRAAPELIAGFAIRTAVCTS.

His-118 acts as the Proton donor in catalysis. Residue His-182 is the Proton acceptor of the active site.

It belongs to the LigB/MhpB extradiol dioxygenase family. As to quaternary structure, homotetramer. Fe(2+) serves as cofactor.

The catalysed reaction is 3-(2,3-dihydroxyphenyl)propanoate + O2 = (2Z,4E)-2-hydroxy-6-oxonona-2,4-dienedioate + H(+). The enzyme catalyses (2E)-3-(2,3-dihydroxyphenyl)prop-2-enoate + O2 = (2Z,4E,7E)-2-hydroxy-6-oxonona-2,4,7-trienedioate + H(+). The protein operates within aromatic compound metabolism; 3-phenylpropanoate degradation. Functionally, catalyzes the non-heme iron(II)-dependent oxidative cleavage of 2,3-dihydroxyphenylpropionic acid and 2,3-dihydroxicinnamic acid into 2-hydroxy-6-ketononadienedioate and 2-hydroxy-6-ketononatrienedioate, respectively. This chain is 2,3-dihydroxyphenylpropionate/2,3-dihydroxicinnamic acid 1,2-dioxygenase, found in Mycolicibacterium vanbaalenii (strain DSM 7251 / JCM 13017 / BCRC 16820 / KCTC 9966 / NRRL B-24157 / PYR-1) (Mycobacterium vanbaalenii).